Reading from the N-terminus, the 137-residue chain is Ribonuclease VapC27 (137 aa).

The PINc domain occupies 7-125 (VDTSVAIPLL…ATRDARAKDT (119 aa)). Residues Asp8 and Asp101 each contribute to the Mg(2+) site.

This sequence belongs to the PINc/VapC protein family. In terms of assembly, interacts with cognate antitoxin VapB27. Mg(2+) serves as cofactor.

The protein resides in the secreted. In terms of biological role, probably the toxic component of a type II toxin-antitoxin (TA) system. An RNase. Its cognate antitoxin is VapB27. The protein is Ribonuclease VapC27 of Mycobacterium tuberculosis (strain ATCC 25618 / H37Rv).